Here is a 224-residue protein sequence, read N- to C-terminus: Prolactin-2C3 (224 aa).

An N-terminal signal peptide occupies residues 1–29 (MLPSSIQPCSWILLLLLVNSSLLWKNVAS). A glycan (N-linked (GlcNAc...) asparagine) is linked at Asn19. Cys33 and Cys40 are disulfide-bonded. N-linked (GlcNAc...) asparagine glycans are attached at residues Asn57, Asn75, and Asn88. 2 disulfide bridges follow: Cys87-Cys199 and Cys216-Cys224.

It belongs to the somatotropin/prolactin family. In terms of processing, N-glycosylated and sialylated. Expressed in placenta and hair follicles, with highest expression levels detected in the outer root sheath and no expression detected in bulb. Expressed in placenta, skin wounds, keratinocytes and weakly in embryonic fibroblasts. Expressed in brain, cerebellum and in Neuro-2a cell line. Not detected in liver, kidney, ovary, pituitary gland and brain.

It is found in the secreted. Its subcellular location is the endoplasmic reticulum. May have a role in embryonic development. It is likely to provide a growth stimulus to target cells in maternal and fetal tissues during the development of the embryo at mid-gestation. May play a role during wound healing and in the hair follicle cycle as a growth factor and/or an angiogenesis factor. May play a role in microvilli formation and cell proliferation of neuroblastoma cells. In Mus musculus (Mouse), this protein is Prolactin-2C3 (Prl2c3).